Consider the following 333-residue polypeptide: Putative ketol-acid reductoisomerase 2 (333 aa).

In terms of domain architecture, KARI N-terminal Rossmann spans 1 to 182 (MDKTVLDANL…AIPGGIAVIS (182 aa)). Positions 183 to 329 (SFEEEALLDL…KELYKLLGRK (147 aa)) constitute a KARI C-terminal knotted domain.

Belongs to the ketol-acid reductoisomerase family.

It catalyses the reaction (2R)-2,3-dihydroxy-3-methylbutanoate + NADP(+) = (2S)-2-acetolactate + NADPH + H(+). The enzyme catalyses (2R,3R)-2,3-dihydroxy-3-methylpentanoate + NADP(+) = (S)-2-ethyl-2-hydroxy-3-oxobutanoate + NADPH + H(+). The protein operates within amino-acid biosynthesis; L-isoleucine biosynthesis; L-isoleucine from 2-oxobutanoate: step 2/4. Its pathway is amino-acid biosynthesis; L-valine biosynthesis; L-valine from pyruvate: step 2/4. In Saccharolobus solfataricus (strain ATCC 35092 / DSM 1617 / JCM 11322 / P2) (Sulfolobus solfataricus), this protein is Putative ketol-acid reductoisomerase 2 (ilvC2).